Consider the following 549-residue polypeptide: Cytoplasmic trehalase (549 aa).

Residues Arg168, 175–176 (WD), Asn212, 221–223 (RSQ), 292–294 (RDE), and Gly324 each bind substrate. Active-site proton donor/acceptor residues include Asp326 and Glu509. Glu525 contributes to the substrate binding site.

Belongs to the glycosyl hydrolase 37 family. Monomer.

It localises to the cytoplasm. It carries out the reaction alpha,alpha-trehalose + H2O = alpha-D-glucose + beta-D-glucose. The protein operates within glycan degradation; trehalose degradation; D-glucose from alpha,alpha-trehalose: step 1/1. In terms of biological role, hydrolyzes trehalose to glucose. Could be involved, in cells returning to low osmolarity conditions, in the utilization of the accumulated cytoplasmic trehalose, which was synthesized in response to high osmolarity. The sequence is that of Cytoplasmic trehalase from Escherichia coli O127:H6 (strain E2348/69 / EPEC).